Reading from the N-terminus, the 227-residue chain is Response regulator protein TodT (227 aa).

The Response regulatory domain occupies 28-142 (VIYILDDDNA…ELLGAIRAAL (115 aa)). At Asp77 the chain carries 4-aspartylphosphate. Positions 158–223 (LKENYESLSK…DLVRVTERLK (66 aa)) constitute an HTH luxR-type domain. Positions 182 to 201 (NKQTALELDISEATVKVHRH) form a DNA-binding region, H-T-H motif.

In terms of processing, phosphorylated by TodS.

It is found in the cytoplasm. In terms of biological role, member of the two-component regulatory system TodS/TodT involved in the regulation of toluene degradation. Phosphorylated TodT activates transcription of the tod operon (todXFC1C2BADEGIH). Binds specifically to a 6-bp palindromic DNA structure in the tod promoter region. This Pseudomonas putida (strain ATCC 700007 / DSM 6899 / JCM 31910 / BCRC 17059 / LMG 24140 / F1) protein is Response regulator protein TodT (todT).